The primary structure comprises 180 residues: Large ribosomal subunit protein uL6 (180 aa).

This sequence belongs to the universal ribosomal protein uL6 family. As to quaternary structure, part of the 50S ribosomal subunit.

Functionally, this protein binds to the 23S rRNA, and is important in its secondary structure. It is located near the subunit interface in the base of the L7/L12 stalk, and near the tRNA binding site of the peptidyltransferase center. The sequence is that of Large ribosomal subunit protein uL6 from Anaeromyxobacter sp. (strain K).